The sequence spans 367 residues: Forkhead box protein I2-B (367 aa).

Over residues 31–40 (QQQNQQLPQR) the composition is skewed to low complexity. The interval 31–51 (QQQNQQLPQRPAAPPAPGYGL) is disordered. A DNA-binding region (fork-head) is located at residues 124 to 218 (RPPYSYSSLI…DNGNFRRKRK (95 aa)). The tract at residues 224 to 254 (VGAGFDEESNEDKKPLALKSLGPDSPGGASV) is disordered.

It localises to the nucleus. Possible transcriptional activator. The sequence is that of Forkhead box protein I2-B (foxi2-b) from Xenopus laevis (African clawed frog).